Here is a 215-residue protein sequence, read N- to C-terminus: Kinetochore protein Spc25 (215 aa).

Positions 43 to 114 (DNLLTAMEKA…MECIHALKRA (72 aa)) form a coiled coil.

The protein belongs to the SPC25 family. As to quaternary structure, component of the Ndc80 complex, which is composed of Ndc80, Nuf2 and Spc25.

The protein localises to the nucleus. Its subcellular location is the chromosome. It is found in the centromere. The protein resides in the kinetochore. In terms of biological role, acts as a component of the essential kinetochore-associated Ndc80 complex, which is required for chromosome segregation and spindle checkpoint activity during meiosis and mitosis. Required for kinetochore integrity and the organization of stable microtubule binding sites in the outer plate of the kinetochore. Participates in SAC signaling that responds specifically to disruptions in spindle microtubule dynamics. The NDC80 complex synergistically enhances the affinity of the SKA1 complex for microtubules and may allow the NDC80 complex to track depolymerizing microtubules. This chain is Kinetochore protein Spc25, found in Drosophila ananassae (Fruit fly).